Consider the following 2359-residue polypeptide: Neuron navigator 3 (2359 aa).

Residues 77 to 184 (IEDSKIYTDW…LFFSLSRYKQ (108 aa)) form the Calponin-homology (CH) domain. Composition is skewed to polar residues over residues 204–226 (THTA…SSLT), 233–243 (SKHSGIATSQK), 257–279 (ASSS…FNSI), and 300–317 (QPSS…TSGQ). Disordered regions lie at residues 204-623 (THTA…QQQH) and 641-660 (ENEG…TKMD). Over residues 318-329 (PPASAIPSPSAS) the composition is skewed to low complexity. Positions 335 to 352 (KSMNVKHSATSTMLTVKQ) are enriched in polar residues. Low complexity-rich tracts occupy residues 353–363 (PSPATSPTPSS) and 427–439 (NSGL…TNSS). Residues 465 to 491 (PKEKEEKTRDKNKACAEKSGKEEKDQV) are compositionally biased toward basic and acidic residues. Over residues 522-536 (IPSSSGIPKPGSKVP) the composition is skewed to low complexity. Residues 592-623 (ASPSSSCVMQVTHSSGQSPGNGAVQLPQQQQH) show a composition bias toward polar residues. A coiled-coil region spans residues 680–708 (EARRMRTVKNIADLRQNLEETMSSLRGTQ). Disordered stretches follow at residues 878–1315 (ADSW…SPLF), 1413–1472 (LSES…AMSS), 1653–1758 (GALN…KPSQ), and 1829–1855 (ETGN…SRQS). 2 stretches are compositionally biased toward low complexity: residues 883–896 (DSSS…DTLD) and 904–916 (NTTS…SNIT). Residues 917 to 926 (VPSRKNTQLK) are compositionally biased toward polar residues. The segment covering 943-960 (EELKKAEGDCDSHGDGAA) has biased composition (basic and acidic residues). 2 stretches are compositionally biased toward polar residues: residues 978-989 (QKASLSVSQTGS) and 997-1013 (QGGT…TSAL). Basic and acidic residues predominate over residues 1017–1029 (GKTDDAKASEKGK). Low complexity-rich tracts occupy residues 1077 to 1095 (GAST…GSAT) and 1160 to 1173 (SSTS…SSKS). Over residues 1190–1199 (GRSSPVTVNQ) the composition is skewed to polar residues. Low complexity-rich tracts occupy residues 1209-1229 (VSDS…TSAS), 1256-1266 (GAKAGGKSASA), and 1274-1285 (SSSVVLSPSTSL). The span at 1299-1308 (GSMGSAGGLS) shows a compositional bias: gly residues. Residues 1439 to 1448 (NQEEGKEWLR) are compositionally biased toward basic and acidic residues. The span at 1449–1461 (SHSTGGLQDTGNQ) shows a compositional bias: polar residues. Ser1462 and Ser1466 each carry phosphoserine. Positions 1462-1472 (SPLVSPSAMSS) are enriched in low complexity. A coiled-coil region spans residues 1565–1656 (AEEKAHSEQI…AQAAIQGALN (92 aa)). 2 stretches are compositionally biased toward low complexity: residues 1675-1692 (SVSS…GSGN) and 1749-1758 (SGSSSMKPSQ). A coiled-coil region spans residues 1768 to 1835 (EAEAEIILQL…LKAETGNTAK (68 aa)). Positions 1841–1855 (SDSSSTASSSSSRQS) are enriched in low complexity.

It belongs to the Nav/unc-53 family. In terms of tissue distribution, present in neurons from central and peripheral nervous systems (at protein level). Highly expressed in brain cortex, midbrain, cerebellum and hippocampus.

The protein localises to the nucleus outer membrane. Functionally, plays a role in cell migration. May be involved in neuron regeneration. May regulate IL2 production by T-cells. The sequence is that of Neuron navigator 3 (Nav3) from Mus musculus (Mouse).